We begin with the raw amino-acid sequence, 455 residues long: GTPase Der (455 aa).

2 EngA-type G domains span residues 4-169 (PVVA…PPKS) and 178-353 (IQLA…EQHR). GTP contacts are provided by residues 10-17 (GRPNVGKS), 57-61 (DTGGL), 120-123 (NKCE), 184-191 (GRPNVGKS), 231-235 (DTAGI), and 296-299 (NKWD). The KH-like domain maps to 354–439 (RRVSTSVVNE…PLKLFWRGKQ (86 aa)).

The protein belongs to the TRAFAC class TrmE-Era-EngA-EngB-Septin-like GTPase superfamily. EngA (Der) GTPase family. In terms of assembly, associates with the 50S ribosomal subunit.

Its function is as follows. GTPase that plays an essential role in the late steps of ribosome biogenesis. This is GTPase Der from Synechococcus sp. (strain WH7803).